We begin with the raw amino-acid sequence, 409 residues long: Tryptophan synthase beta chain (409 aa).

Residue lysine 100 is modified to N6-(pyridoxal phosphate)lysine.

It belongs to the TrpB family. In terms of assembly, tetramer of two alpha and two beta chains. The cofactor is pyridoxal 5'-phosphate.

The catalysed reaction is (1S,2R)-1-C-(indol-3-yl)glycerol 3-phosphate + L-serine = D-glyceraldehyde 3-phosphate + L-tryptophan + H2O. It participates in amino-acid biosynthesis; L-tryptophan biosynthesis; L-tryptophan from chorismate: step 5/5. Its function is as follows. The beta subunit is responsible for the synthesis of L-tryptophan from indole and L-serine. The chain is Tryptophan synthase beta chain from Pyrobaculum arsenaticum (strain DSM 13514 / JCM 11321 / PZ6).